The sequence spans 448 residues: Ribosomal protein uS12 methylthiotransferase RimO (448 aa).

In terms of domain architecture, MTTase N-terminal spans 7-123 (EKVSLVSLGC…IAEIIAEKKQ (117 aa)). Residues C16, C52, C86, C161, C165, and C168 each contribute to the [4Fe-4S] cluster site. Positions 147 to 377 (SSPHYTAYLK…MRTQARVSFK (231 aa)) constitute a Radical SAM core domain. The TRAM domain maps to 380 to 448 (RTLVDSEEDV…DYDLIGEIVD (69 aa)).

Belongs to the methylthiotransferase family. RimO subfamily. It depends on [4Fe-4S] cluster as a cofactor.

It is found in the cytoplasm. It carries out the reaction L-aspartate(89)-[ribosomal protein uS12]-hydrogen + (sulfur carrier)-SH + AH2 + 2 S-adenosyl-L-methionine = 3-methylsulfanyl-L-aspartate(89)-[ribosomal protein uS12]-hydrogen + (sulfur carrier)-H + 5'-deoxyadenosine + L-methionine + A + S-adenosyl-L-homocysteine + 2 H(+). In terms of biological role, catalyzes the methylthiolation of an aspartic acid residue of ribosomal protein uS12. The polypeptide is Ribosomal protein uS12 methylthiotransferase RimO (Citrifermentans bemidjiense (strain ATCC BAA-1014 / DSM 16622 / JCM 12645 / Bem) (Geobacter bemidjiensis)).